The primary structure comprises 103 residues: Small ribosomal subunit protein bS20 (103 aa).

Residues 1–20 show a composition bias toward basic residues; it reads MATAKPKKKNPRLASGRKRV. A disordered region spans residues 1-31; the sequence is MATAKPKKKNPRLASGRKRVRQDTKLNAANT.

Belongs to the bacterial ribosomal protein bS20 family.

In terms of biological role, binds directly to 16S ribosomal RNA. This Polaromonas sp. (strain JS666 / ATCC BAA-500) protein is Small ribosomal subunit protein bS20.